The primary structure comprises 630 residues: Multidrug transporter TPO3 (630 aa).

Polar residues predominate over residues 1–35; it reads MVDQESLVSFSSETSQSINSDIDIESQQQPRQYIP. Disordered stretches follow at residues 1–46 and 107–157; these read MVDQ…KERL and TSTA…NQQP. Residues 37 to 46 show a composition bias toward basic and acidic residues; the sequence is NEKDGNKERL. Over residues 125 to 137 the composition is skewed to low complexity; the sequence is RRSQNIAASSNSS. N-linked (GlcNAc...) asparagine glycosylation occurs at Asn135. A run of 12 helical transmembrane segments spans residues 190-210, 222-242, 252-272, 282-302, 312-332, 342-362, 423-443, 453-473, 494-514, 519-539, 553-575, and 587-607; these read ILSC…GGLF, AAIL…LIWS, LAYF…ALSP, FLCG…IADM, IAFF…VNGF, LIFW…AFIP, FYVC…PVVF, LIGL…ATTF, LFGA…LGAT, IIWV…VLIY, YASS…FPLF, and WASW…FGFY.

It belongs to the major facilitator superfamily. DHA1 family. Polyamines/proton antiporter (TC 2.A.1.2.16) subfamily.

Its subcellular location is the cell membrane. Its function is as follows. Cell membrane polyamine/proton antiporter, involved in the detoxification of excess polyamines in the cytoplasm. Involved in the resistance to the imidazole antifungal drugs tioconazole, miconazole, clotrimazole and ketoconazole; to the triazole fluconazole; but not to the antifungals flucytosine or amphotericin B. Plays a role in spermine homeostasis, but spermine accumulation in response to clotrimazole is independent of TPO3. The protein is Multidrug transporter TPO3 of Candida glabrata (strain ATCC 2001 / BCRC 20586 / JCM 3761 / NBRC 0622 / NRRL Y-65 / CBS 138) (Yeast).